The chain runs to 449 residues: MVIVAVLAAGRGTRMKSSLPKVLHPLGGRSLVGWVLHQVQSLQPQRQFVIIGYGGDAVRAALADQPQLEFVEQRQQLGTGHAVQQLLPYLKDYEGHLLVLNGDVPLLRGQTLAHLIEVHQNHNNAATILTAQIPNPQGYGRVICDSQNMLKQIIEDRDCTTAQKQNCRINAGVYCFHWPQLAAVLPHLQSNNDQQEYYLTDAVNALSPVMAVDVEDYEEILGVNDRVQLAAAYQVLQNRIKKAWMQAGVTLIDPASITIEDTVELAPDVVIEPQTHLRGQTRIGSGSIIGPGTLIENSVIGERVTARYAVITDSEIGEDTQVGPFAHIRQQSVVADHCRIGNFVELKKARLGSDTKASHLSYLGDATLGDRVNIGAGTITANYDGVRKHPTHIGSGTKTGANSVLVAPVTLGNNVTVAAGSTVTADVPDNALVIARCRQVVKPNWEPEA.

The pyrophosphorylase stretch occupies residues 1 to 226 (MVIVAVLAAG…YEEILGVNDR (226 aa)). Residues 7–10 (LAAG), lysine 21, glutamine 73, and 78–79 (GT) each bind UDP-N-acetyl-alpha-D-glucosamine. A Mg(2+)-binding site is contributed by aspartate 103. UDP-N-acetyl-alpha-D-glucosamine is bound by residues glycine 140, glutamate 155, asparagine 170, and asparagine 224. Residue asparagine 224 participates in Mg(2+) binding. The tract at residues 227–247 (VQLAAAYQVLQNRIKKAWMQA) is linker. The N-acetyltransferase stretch occupies residues 248–449 (GVTLIDPASI…VVKPNWEPEA (202 aa)). Arginine 329 and lysine 347 together coordinate UDP-N-acetyl-alpha-D-glucosamine. The Proton acceptor role is filled by histidine 359. UDP-N-acetyl-alpha-D-glucosamine-binding residues include tyrosine 362 and asparagine 373. Acetyl-CoA contacts are provided by residues alanine 376, 382 to 383 (NY), alanine 419, and arginine 436.

This sequence in the N-terminal section; belongs to the N-acetylglucosamine-1-phosphate uridyltransferase family. The protein in the C-terminal section; belongs to the transferase hexapeptide repeat family. In terms of assembly, homotrimer. It depends on Mg(2+) as a cofactor.

Its subcellular location is the cytoplasm. It carries out the reaction alpha-D-glucosamine 1-phosphate + acetyl-CoA = N-acetyl-alpha-D-glucosamine 1-phosphate + CoA + H(+). It catalyses the reaction N-acetyl-alpha-D-glucosamine 1-phosphate + UTP + H(+) = UDP-N-acetyl-alpha-D-glucosamine + diphosphate. The protein operates within nucleotide-sugar biosynthesis; UDP-N-acetyl-alpha-D-glucosamine biosynthesis; N-acetyl-alpha-D-glucosamine 1-phosphate from alpha-D-glucosamine 6-phosphate (route II): step 2/2. It functions in the pathway nucleotide-sugar biosynthesis; UDP-N-acetyl-alpha-D-glucosamine biosynthesis; UDP-N-acetyl-alpha-D-glucosamine from N-acetyl-alpha-D-glucosamine 1-phosphate: step 1/1. Its pathway is bacterial outer membrane biogenesis; LPS lipid A biosynthesis. In terms of biological role, catalyzes the last two sequential reactions in the de novo biosynthetic pathway for UDP-N-acetylglucosamine (UDP-GlcNAc). The C-terminal domain catalyzes the transfer of acetyl group from acetyl coenzyme A to glucosamine-1-phosphate (GlcN-1-P) to produce N-acetylglucosamine-1-phosphate (GlcNAc-1-P), which is converted into UDP-GlcNAc by the transfer of uridine 5-monophosphate (from uridine 5-triphosphate), a reaction catalyzed by the N-terminal domain. This Thermosynechococcus vestitus (strain NIES-2133 / IAM M-273 / BP-1) protein is Bifunctional protein GlmU.